Consider the following 298-residue polypeptide: MADQLIRGTAADNGIRVVGVISTNLTEEARQRHKLSYVATAALGRTMASALLISSSMKKQEARLNLRIKGDGPLGGLLVDAGPDGTVRGYVQNPGVELPPNAKGKLDVGGAVGKGFLYAVKDFGRGYPYSSTVELVSGEIGDDVTHYLATSEQTPSALLVGVFVGAEGVTAAGGILLQILPKAARDESLVAKLESRLGQLSGFTPLLQQGKSLHDIFQDLLGDEDLNIFPETQMVRFDCGCTFERMMGALKMLGQDELLDMIEKDGGAEATCNFCNEVYHADVDHLSRLVEELKADAH.

2 disulfides stabilise this stretch: C239-C241 and C272-C275.

The protein belongs to the HSP33 family. Under oxidizing conditions two disulfide bonds are formed involving the reactive cysteines. Under reducing conditions zinc is bound to the reactive cysteines and the protein is inactive.

Its subcellular location is the cytoplasm. Its function is as follows. Redox regulated molecular chaperone. Protects both thermally unfolding and oxidatively damaged proteins from irreversible aggregation. Plays an important role in the bacterial defense system toward oxidative stress. In Picosynechococcus sp. (strain ATCC 27264 / PCC 7002 / PR-6) (Agmenellum quadruplicatum), this protein is 33 kDa chaperonin.